The sequence spans 266 residues: Probable septum site-determining protein MinC (266 aa).

A compositionally biased stretch (low complexity) spans 1 to 21; sequence MSEAESTPVEEPVVESTEGSE. Residues 1 to 28 are disordered; sequence MSEAESTPVEEPVVESTEGSEAIPEVEQ.

The protein belongs to the MinC family. Interacts with MinD and FtsZ.

Functionally, cell division inhibitor that blocks the formation of polar Z ring septums. Rapidly oscillates between the poles of the cell to destabilize FtsZ filaments that have formed before they mature into polar Z rings. Prevents FtsZ polymerization. The chain is Probable septum site-determining protein MinC from Thermosynechococcus vestitus (strain NIES-2133 / IAM M-273 / BP-1).